Here is a 562-residue protein sequence, read N- to C-terminus: NAD-dependent malic enzyme (562 aa).

Tyrosine 101 serves as the catalytic Proton donor. Arginine 154 provides a ligand contact to NAD(+). Residue lysine 172 is the Proton acceptor of the active site. Glutamate 243, aspartate 244, and aspartate 267 together coordinate a divalent metal cation. NAD(+)-binding residues include aspartate 267 and asparagine 415.

The protein belongs to the malic enzymes family. In terms of assembly, homotetramer. Mg(2+) is required as a cofactor. Mn(2+) serves as cofactor.

It catalyses the reaction (S)-malate + NAD(+) = pyruvate + CO2 + NADH. It carries out the reaction oxaloacetate + H(+) = pyruvate + CO2. This chain is NAD-dependent malic enzyme, found in Shewanella frigidimarina (strain NCIMB 400).